The primary structure comprises 72 residues: Large ribosomal subunit protein bL31 (72 aa).

This sequence belongs to the bacterial ribosomal protein bL31 family. Type A subfamily. As to quaternary structure, part of the 50S ribosomal subunit.

Binds the 23S rRNA. The polypeptide is Large ribosomal subunit protein bL31 (Maricaulis maris (strain MCS10) (Caulobacter maris)).